Consider the following 87-residue polypeptide: U9-ctenitoxin-Pn1a (87 aa).

The signal sequence occupies residues 1–22 (MWLKTQLFVLAIAVIALLEVHA). The propeptide occupies 23–37 (EPESNDNNELVVEEA). 4 disulfide bridges follow: cysteine 40/cysteine 54, cysteine 47/cysteine 64, cysteine 53/cysteine 73, and cysteine 66/cysteine 71. A propeptide spanning residues 75–87 (KSLREMAAAAFGR) is cleaved from the precursor.

The protein belongs to the neurotoxin 02 (plectoxin) family. 01 (Tx3) subfamily. In terms of tissue distribution, expressed by the venom gland.

It is found in the secreted. Its function is as follows. Antagonist of L-type calcium channels (Cav1/CACNA1). The chain is U9-ctenitoxin-Pn1a from Phoneutria nigriventer (Brazilian armed spider).